Here is a 227-residue protein sequence, read N- to C-terminus: MGQLGALLHLVDPTLPIGGFNHSNGLETFVQQGKVNSRASLEEYVQTQLMQNWIYNDGAYLSLAFDAMANHDLGRLLQLDQELAASKIARESREGSYKLGVRLLKIFIRYENHPLLSEFQQAVSEKRCQGYFPIVFAMVAQAMNLDKAETLYAFYYNAAVGVVTNGVKLVPLSQMDGQDILFALRTPLAQAVENSLNPDLDWLGAATLASDIRSMQHEQLYTRLYMS.

This sequence belongs to the UreF family. As to quaternary structure, ureD, UreF and UreG form a complex that acts as a GTP-hydrolysis-dependent molecular chaperone, activating the urease apoprotein by helping to assemble the nickel containing metallocenter of UreC. The UreE protein probably delivers the nickel.

Its subcellular location is the cytoplasm. Required for maturation of urease via the functional incorporation of the urease nickel metallocenter. This is Urease accessory protein UreF from Actinobacillus pleuropneumoniae serotype 3 (strain JL03).